The primary structure comprises 103 residues: N(4)-acetylcytidine amidohydrolase (103 aa).

The region spanning I6–K101 is the ASCH domain. K21 acts as the Proton acceptor in catalysis. The active-site Nucleophile is T24. Catalysis depends on E74, which acts as the Proton donor.

The protein belongs to the N(4)-acetylcytidine amidohydrolase family.

The enzyme catalyses N(4)-acetylcytidine + H2O = cytidine + acetate + H(+). The catalysed reaction is N(4)-acetyl-2'-deoxycytidine + H2O = 2'-deoxycytidine + acetate + H(+). It catalyses the reaction N(4)-acetylcytosine + H2O = cytosine + acetate + H(+). Functionally, catalyzes the hydrolysis of N(4)-acetylcytidine (ac4C). The chain is N(4)-acetylcytidine amidohydrolase (yqfB) from Shigella boydii serotype 4 (strain Sb227).